We begin with the raw amino-acid sequence, 385 residues long: Zinc cluster transcription factor CZF1 (385 aa).

Residues 1 to 19 show a composition bias toward polar residues; it reads MSSIPNINWNDPNNGKSNT. Disordered regions lie at residues 1 to 117, 154 to 216, and 233 to 308; these read MSSI…QQPL, LQQR…QQWD, and SSIQ…KPIT. Residues 20-38 are compositionally biased toward low complexity; that stretch reads SRQSQPQPQLPSNVSPPNS. 2 stretches are compositionally biased toward polar residues: residues 52 to 67 and 88 to 97; these read YGSSQFSNEYSRNPNT and YPVQQTAQQR. Composition is skewed to low complexity over residues 102 to 117 and 154 to 169; these read LQQVHSQQQQQQQQPL and LQQRQQAQGQQLKSQL. Polar residues predominate over residues 170 to 200; the sequence is NEQNAMMSASTQQYPVQDFTNPYPNAQNPAE. Low complexity-rich tracts occupy residues 201-214 and 233-256; these read QQQQQQPLRTQSQQ and SSIQQQIPPQNLSPSEQQQVKQQQ. The segment covering 265–275 has biased composition (basic residues); it reads KKKPGRKPKLR. Polar residues predominate over residues 279–291; sequence ESSSETPQVPKTA. Positions 315 to 342 form a DNA-binding region, zn(2)-C6 fungal-type; sequence CLTCRQRKKRCCETRPRCTECTRLRLNC. The interval 345 to 364 is disordered; it reads PKPGTEHKNKPKDQKDDENT. Basic and acidic residues predominate over residues 348–364; sequence GTEHKNKPKDQKDDENT.

As to quaternary structure, interacts with EFG1.

Its subcellular location is the nucleus. Functionally, transcriptional regulator of the switch between 2 heritable states, the white and opaque states. These 2 cell types differ in many characteristics, including cell structure, mating competence, and virulence. Each state is heritable for many generations, and switching between states occurs stochastically, at low frequency. Contributes to formation of the opaque state, but is not necessary for heritability of the opaque state. Plays a role in cell adhesion and pseudohyphal growth. Involved in acquisition of drug resistance and acts as a repressor of beta-glucan synthesis, thus negatively regulating cell wall integrity. Plays a role in adherence, invasion and damage to oral epithelial cells. The sequence is that of Zinc cluster transcription factor CZF1 (CZF1) from Candida albicans (strain SC5314 / ATCC MYA-2876) (Yeast).